Here is a 143-residue protein sequence, read N- to C-terminus: Turripeptide VIII-01 (143 aa).

An N-terminal signal peptide occupies residues 1–23 (MALSLDILMSVTMVTAVLTTVNA). Positions 24 to 32 (EYKDSRLDS) are excised as a propeptide.

Contains 4 disulfide bonds. Expressed by the venom duct.

It is found in the secreted. This Gemmula speciosa (Splendid gem-turris) protein is Turripeptide VIII-01.